The primary structure comprises 314 residues: tRNA dimethylallyltransferase (314 aa).

G12–S19 is a binding site for ATP. T14 to S19 provides a ligand contact to substrate.

This sequence belongs to the IPP transferase family. In terms of assembly, monomer. Mg(2+) is required as a cofactor.

It catalyses the reaction adenosine(37) in tRNA + dimethylallyl diphosphate = N(6)-dimethylallyladenosine(37) in tRNA + diphosphate. Its function is as follows. Catalyzes the transfer of a dimethylallyl group onto the adenine at position 37 in tRNAs that read codons beginning with uridine, leading to the formation of N6-(dimethylallyl)adenosine (i(6)A). This chain is tRNA dimethylallyltransferase, found in Mycolicibacterium paratuberculosis (strain ATCC BAA-968 / K-10) (Mycobacterium paratuberculosis).